We begin with the raw amino-acid sequence, 1772 residues long: MGQELSQHERYVEQLKQALKTRGVKVKYADLLKFFDFVKDTCPWFPQEGTIDIKRWRRVGDCFQDYYNTFGPEKVPVTAFSYWNLIKELIDKKEVNPQVMAAVAQTEEILKTSSHTELTTKPSQNPDLDLISLDSDDEGAKGSSLKDKNLSCTKKPKRFPVLLTAQTSADPEDPNPSEVDWDGLEDEAAKYHNPDWPPFLTRPPPYNKATPSAPTVMAVVNPKEELKEKIAQLEEQIKLEELHQALISKLQKLKTGNETVTSPETAGGFSRTPHWPGQHIPKGKCCASREKEEQTPKDIFPVTETVDGQGQAWRHHNGFDFTVIKELKTAASQYGATAPYTLAIVESVADNWLTPTDWNTLVRAVLSGGDHLLWKSEFFENCRETAKRNQQAGNGWDFDMLTGSGNYSSTDAQMQYDPGLFAQIQAAATKAWRKLPVKGDPGASLTGVKQGPDEPFADFVHRLITTAGRIFGSAEAGVDYVKQLAYENANPACQAAIRPYRKKTDLTGYIRLCSDIGPSYQQGLAMAAAFSGQTVKDFLNNKNKEKGGCCFKCGRKGHFAKNCHEHIHNNSETKAPGLCPRCKRGKHWANECKSKTDSQGNPLPPHQGNRTEGPAPGPETSLWGGQLCSSQQKQPISKLTRATPGSAGLDLSSTSHTVLTPEMGPQALSTGIYGPLPPNTFGLILGRSSITIKGLQVYPGVIDNDYTGEIKIMAKAVNNIVTVPQGNRIAQLILLPLIETDNKVQQPYRGQGSFGSSDIYWVQPITCQKPSLTLWLDDKMFTGLIDTGADVTIIKLEDWPPNWPITDTLTNLRGIGQSNNPKQSSKYLTWRDKENNSGLIKPFVIPNLPVNLWGRDLLSQMKIMMCSPSDIVTAQMLAQGYSPGKGLGKNENGILHPIPNQGQFDKKGFGNFLTAAIDMLAPQQCAEPITWKSDEPVWVDQWPLTSEKLAAAQQLVQEQLEAGHITESNSPWNTPIFVIKKKSGKWRLLQDLRAVNATMVLMGALQPGLPSPVAIPQGYLKIIIDLKDCFFSIPLHPSDQKRFAFSLPSTNFKEPMQRFQWKVLPQRMANSPTLCQKYVATAIHKVRHAWKQMYIIHYMDDILIAGKDGQQVLQCFDQLKQELTIAGLHIAPEKIQLQDPYTYLGFELNGPKITNQKAVIRKDKLQTLNDFQKLLGDINWLRPYLKLTTADLKPLFDTLKGDSNPNSHRSLSKEALALLDKVETAIAEQFVTHINYSLPLMFLIFNTALTPTGLFWQNNPIMWVHLPASPKKVLLPYYDAIADLIILGRDHSKKYFGIEPSVIIQPYSKSQIDWLMQNTEMWPIACASYVGILDNHYPPNKLIQFCKLHAFIFPQIISKTPLNNALLVFTDGSSTGMAAYTLADTTIKFQTNLNSAQLVELQALIAVLSAFPNQPLNIYTDSAYLAHSIPLLETVAQIKHISETAKLFLQCQQLIYNRSIPFYIGHVRAHSGLPGPIAHGNQKADLATKTVASNINTNLESAQNAHTLHHLNAQTLKLMFNIPREQARQIVRQCPICATYLPVPHLGVNPRGLLPNMIWQMDVTHYSEFGNLKYIHVSIDTFSGFLLATLQTGETTKHVITHLLHCFSIIGLPKQIKTDNGPGYTSKNFQEFCSTLQIKHVTGIPYNPQGQGIVERAHLSLKTTIEKIKKGEWYPTKGTPRNILNHALFILNFLNLDDQNHSAADRFWHSNPRKQFAMVKWKDPLDNTWPWPDPVIIWGRGSVCVYSQTHDAARWLPERLVKQIPNNNQSRE.

A lipid anchor (N-myristoyl glycine; by host) is attached at glycine 2. Positions 101 to 162 are excised as a propeptide; that stretch reads AAVAQTEEIL…TKKPKRFPVL (62 aa). Over residues 113 to 126 the composition is skewed to polar residues; that stretch reads SSHTELTTKPSQNP. The segment at 113 to 149 is disordered; that stretch reads SSHTELTTKPSQNPDLDLISLDSDDEGAKGSSLKDKN. Over residues 138 to 149 the composition is skewed to basic and acidic residues; the sequence is EGAKGSSLKDKN. The PPXY motif signature appears at 203-206; that stretch reads PPPY. Positions 211–214 match the PTAP/PSAP motif motif; sequence PSAP. Positions 217 to 258 form a coiled coil; sequence MAVVNPKEELKEKIAQLEEQIKLEELHQALISKLQKLKTGNE. Positions 258 to 282 are disordered; sequence ETVTSPETAGGFSRTPHWPGQHIPK. The segment at 548–565 adopts a CCHC-type zinc-finger fold; that stretch reads GCCFKCGRKGHFAKNCHE. Residues 593-626 form a disordered region; the sequence is KSKTDSQGNPLPPHQGNRTEGPAPGPETSLWGGQ. The Peptidase A2 domain maps to 781–857; sequence FTGLIDTGAD…LPVNLWGRDL (77 aa). The Protease; shared with dimeric partner role is filled by aspartate 786. The G-patch domain maps to 868-914; it reads PSDIVTAQMLAQGYSPGKGLGKNENGILHPIPNQGQFDKKGFGNFLT. In terms of domain architecture, Reverse transcriptase spans 960 to 1148; that stretch reads LEAGHITESN…DPYTYLGFEL (189 aa). Mg(2+) contacts are provided by aspartate 1025, aspartate 1100, aspartate 1101, aspartate 1371, glutamate 1400, aspartate 1421, and aspartate 1485. An RNase H type-1 domain is found at 1362 to 1493; that stretch reads LNNALLVFTD…ADLATKTVAS (132 aa). Residues 1497–1538 form an Integrase-type zinc finger; that stretch reads TNLESAQNAHTLHHLNAQTLKLMFNIPREQARQIVRQCPICA. Residues histidine 1506, histidine 1510, cysteine 1534, and cysteine 1537 each coordinate Zn(2+). The 170-residue stretch at 1551–1720 folds into the Integrase catalytic domain; that stretch reads RGLLPNMIWQ…NPRKQFAMVK (170 aa). Aspartate 1562, aspartate 1619, and glutamate 1655 together coordinate Mg(2+). Residues 1717–1766 constitute a DNA-binding region (integrase-type); that stretch reads AMVKWKDPLDNTWPWPDPVIIWGRGSVCVYSQTHDAARWLPERLVKQIPN.

Belongs to the retroviral Pol polyprotein family. Homodimer. As to quaternary structure, interacts with the G-patch peptide. In terms of assembly, interacts with the reverse transcriptase/ribonuclease H. Homotrimer. Requires Mg(2+) as cofactor. Post-translationally, released by autocatalytic processing. The protease can undergo further autoprocessing to yield 2 shorter but enzymatically active forms of 12 kDa and 13 kDa. In terms of processing, myristoylated. Myristoylation of the matrix (MA) domain mediates the transport and binding of Gag polyproteins to the host plasma membrane and is required for the assembly of viral particles. Specific enzymatic cleavages in vivo yield mature proteins.

It is found in the virion. It carries out the reaction DNA(n) + a 2'-deoxyribonucleoside 5'-triphosphate = DNA(n+1) + diphosphate. The catalysed reaction is Endonucleolytic cleavage to 5'-phosphomonoester.. It catalyses the reaction dUTP + H2O = dUMP + diphosphate + H(+). In terms of biological role, matrix protein. Functionally, nucleocapsid protein p14: Nucleocapsid protein. Capsid protein. Its function is as follows. The aspartyl protease mediates proteolytic cleavages of Gag and Gag-Pol polyproteins during or shortly after the release of the virion from the plasma membrane. Cleavages take place as an ordered, step-wise cascade to yield mature proteins. This process is called maturation. Displays maximal activity during the budding process just prior to particle release from the cell. In terms of biological role, enhances the activity of the reverse transcriptase. May be part of the mature RT. Functionally, RT is a multifunctional enzyme that converts the viral dimeric RNA genome into dsDNA in the cytoplasm, shortly after virus entry into the cell. This enzyme displays a DNA polymerase activity that can copy either DNA or RNA templates, and a ribonuclease H (RNase H) activity that cleaves the RNA strand of RNA-DNA heteroduplexes in a partially processive 3' to 5' endonucleasic mode. Conversion of viral genomic RNA into dsDNA requires many steps. A tRNA binds to the primer-binding site (PBS) situated at the 5' end of the viral RNA. RT uses the 3' end of the tRNA primer to perfom a short round of RNA-dependent minus-strand DNA synthesis. The reading proceeds through the U5 region and ends after the repeated (R) region which is present at both ends of viral RNA. The portion of the RNA-DNA heteroduplex is digested by the RNase H, resulting in a ssDNA product attached to the tRNA primer. This ssDNA/tRNA hybridizes with the identical R region situated at the 3' end of viral RNA. This template exchange, known as minus-strand DNA strong stop transfer, can be either intra- or intermolecular. RT uses the 3' end of this newly synthesized short ssDNA to perfom the RNA-dependent minus-strand DNA synthesis of the whole template. RNase H digests the RNA template except for a polypurine tract (PPT) situated at the 5' end of the genome. It is not clear if both polymerase and RNase H activities are simultaneous. RNase H probably can proceed both in a polymerase-dependent (RNA cut into small fragments by the same RT performing DNA synthesis) and a polymerase-independent mode (cleavage of remaining RNA fragments by free RTs). Secondly, RT performs DNA-directed plus-strand DNA synthesis using the PPT that has not been removed by RNase H as primers. PPT and tRNA primers are then removed by RNase H. The 3' and 5' ssDNA PBS regions hybridize to form a circular dsDNA intermediate. Strand displacement synthesis by RT to the PBS and PPT ends produces a blunt ended, linear dsDNA copy of the viral genome that includes long terminal repeats (LTRs) at both ends. Catalyzes viral DNA integration into the host chromosome, by performing a series of DNA cutting and joining reactions. This Macaca mulatta (Rhesus macaque) protein is Gag-Pro-Pol polyprotein (pol).